The primary structure comprises 264 residues: 4-hydroxy-tetrahydrodipicolinate reductase (264 aa).

8–13 is an NAD(+) binding site; it reads GPRGKM. K36 provides a ligand contact to NADP(+). NAD(+) is bound by residues 97-99 and 123-126; these read GTT and APNF. Residue H153 is the Proton donor/acceptor of the active site. H154 contacts (S)-2,3,4,5-tetrahydrodipicolinate. K157 acts as the Proton donor in catalysis. Residue 163 to 164 participates in (S)-2,3,4,5-tetrahydrodipicolinate binding; sequence GT.

It belongs to the DapB family.

It localises to the cytoplasm. The enzyme catalyses (S)-2,3,4,5-tetrahydrodipicolinate + NAD(+) + H2O = (2S,4S)-4-hydroxy-2,3,4,5-tetrahydrodipicolinate + NADH + H(+). It carries out the reaction (S)-2,3,4,5-tetrahydrodipicolinate + NADP(+) + H2O = (2S,4S)-4-hydroxy-2,3,4,5-tetrahydrodipicolinate + NADPH + H(+). Its pathway is amino-acid biosynthesis; L-lysine biosynthesis via DAP pathway; (S)-tetrahydrodipicolinate from L-aspartate: step 4/4. Its function is as follows. Catalyzes the conversion of 4-hydroxy-tetrahydrodipicolinate (HTPA) to tetrahydrodipicolinate. This Halalkalibacterium halodurans (strain ATCC BAA-125 / DSM 18197 / FERM 7344 / JCM 9153 / C-125) (Bacillus halodurans) protein is 4-hydroxy-tetrahydrodipicolinate reductase.